We begin with the raw amino-acid sequence, 514 residues long: Cobyric acid synthase (514 aa).

The 200-residue stretch at 249-448 (LIDIAVIKLP…VHGVFDNDEI (200 aa)) folds into the GATase cobBQ-type domain. Cysteine 330 functions as the Nucleophile in the catalytic mechanism. Histidine 440 is a catalytic residue.

This sequence belongs to the CobB/CobQ family. CobQ subfamily.

It participates in cofactor biosynthesis; adenosylcobalamin biosynthesis. In terms of biological role, catalyzes amidations at positions B, D, E, and G on adenosylcobyrinic A,C-diamide. NH(2) groups are provided by glutamine, and one molecule of ATP is hydrogenolyzed for each amidation. The polypeptide is Cobyric acid synthase (Ruminiclostridium cellulolyticum (strain ATCC 35319 / DSM 5812 / JCM 6584 / H10) (Clostridium cellulolyticum)).